A 183-amino-acid polypeptide reads, in one-letter code: Large ribosomal subunit protein uL5 (183 aa).

This sequence belongs to the universal ribosomal protein uL5 family. As to quaternary structure, part of the 50S ribosomal subunit; part of the 5S rRNA/L5/L18/L25 subcomplex. Contacts the 5S rRNA and the P site tRNA. Forms a bridge to the 30S subunit in the 70S ribosome.

Functionally, this is one of the proteins that bind and probably mediate the attachment of the 5S RNA into the large ribosomal subunit, where it forms part of the central protuberance. In the 70S ribosome it contacts protein S13 of the 30S subunit (bridge B1b), connecting the 2 subunits; this bridge is implicated in subunit movement. Contacts the P site tRNA; the 5S rRNA and some of its associated proteins might help stabilize positioning of ribosome-bound tRNAs. The chain is Large ribosomal subunit protein uL5 from Legionella pneumophila (strain Lens).